Consider the following 486-residue polypeptide: Ribulose bisphosphate carboxylase large chain 1 (486 aa).

Substrate is bound by residues Asn-125 and Thr-175. Catalysis depends on Lys-177, which acts as the Proton acceptor. Lys-179 lines the substrate pocket. 3 residues coordinate Mg(2+): Lys-203, Asp-205, and Glu-206. Position 203 is an N6-carboxylysine (Lys-203). His-295 (proton acceptor) is an active-site residue. Substrate contacts are provided by Arg-296, His-328, and Ser-380.

It belongs to the RuBisCO large chain family. Type I subfamily. In terms of assembly, heterohexadecamer of 8 large chains and 8 small chains. Mg(2+) is required as a cofactor.

The catalysed reaction is 2 (2R)-3-phosphoglycerate + 2 H(+) = D-ribulose 1,5-bisphosphate + CO2 + H2O. It carries out the reaction D-ribulose 1,5-bisphosphate + O2 = 2-phosphoglycolate + (2R)-3-phosphoglycerate + 2 H(+). In terms of biological role, ruBisCO catalyzes two reactions: the carboxylation of D-ribulose 1,5-bisphosphate, the primary event in carbon dioxide fixation, as well as the oxidative fragmentation of the pentose substrate. Both reactions occur simultaneously and in competition at the same active site. The sequence is that of Ribulose bisphosphate carboxylase large chain 1 from Cereibacter sphaeroides (strain ATCC 17025 / ATH 2.4.3) (Rhodobacter sphaeroides).